The following is a 36-amino-acid chain: APLEPVYPGDNATPEQMAQYAADLRRYINMLTRPRY.

Y36 is modified (tyrosine amide).

Belongs to the NPY family.

Its subcellular location is the secreted. In terms of biological role, hormone secreted by pancreatic cells that acts as a regulator of pancreatic and gastrointestinal functions probably by signaling through the G protein-coupled receptor NPY4R2. In Macaca mulatta (Rhesus macaque), this protein is Pancreatic polypeptide (PPY).